The following is a 332-amino-acid chain: Ferredoxin--NADP reductase 2 (332 aa).

FAD-binding residues include Glu-37, Gln-45, Tyr-50, Val-90, Phe-124, Asp-285, and Thr-326.

This sequence belongs to the ferredoxin--NADP reductase type 2 family. In terms of assembly, homodimer. It depends on FAD as a cofactor.

It catalyses the reaction 2 reduced [2Fe-2S]-[ferredoxin] + NADP(+) + H(+) = 2 oxidized [2Fe-2S]-[ferredoxin] + NADPH. This Bacillus pumilus (strain SAFR-032) protein is Ferredoxin--NADP reductase 2.